A 179-amino-acid chain; its full sequence is Arginine repressor (179 aa).

The protein belongs to the ArgR family.

The protein localises to the cytoplasm. Its pathway is amino-acid biosynthesis; L-arginine biosynthesis [regulation]. Functionally, regulates arginine biosynthesis genes. This is Arginine repressor from Renibacterium salmoninarum (strain ATCC 33209 / DSM 20767 / JCM 11484 / NBRC 15589 / NCIMB 2235).